The following is a 206-amino-acid chain: Isochorismatase domain-containing protein 2A (206 aa).

The residue at position 26 (lysine 26) is an N6-succinyllysine. Lysine 93 and lysine 178 each carry N6-acetyllysine; alternate. Residues lysine 93 and lysine 178 each carry the N6-succinyllysine; alternate modification. N6-acetyllysine is present on residues lysine 182 and lysine 185.

It belongs to the isochorismatase family. Interacts with CDKN2A. As to expression, ubiquitous. Expressed predominantly in uterus, stomach and urinary tract.

Its subcellular location is the cytoplasm. The protein localises to the nucleus. The chain is Isochorismatase domain-containing protein 2A from Mus musculus (Mouse).